The following is an 83-amino-acid chain: NAD(P)H-quinone oxidoreductase subunit L, organellar chromatophore (83 aa).

A run of 2 helical transmembrane segments spans residues 17 to 37 (LLLAYGVLGGLYLILVPLALY) and 53 to 73 (LFVYGLVFLFFPGLILLSPFL).

It belongs to the complex I NdhL subunit family. In terms of assembly, NDH-1 can be composed of about 15 different subunits; different subcomplexes with different compositions have been identified which probably have different functions.

The protein resides in the plastid. It is found in the organellar chromatophore thylakoid membrane. It carries out the reaction a plastoquinone + NADH + (n+1) H(+)(in) = a plastoquinol + NAD(+) + n H(+)(out). The catalysed reaction is a plastoquinone + NADPH + (n+1) H(+)(in) = a plastoquinol + NADP(+) + n H(+)(out). Its function is as follows. NDH-1 shuttles electrons from an unknown electron donor, via FMN and iron-sulfur (Fe-S) centers, to quinones in the respiratory and/or the photosynthetic chain. The immediate electron acceptor for the enzyme in this species is believed to be plastoquinone. Couples the redox reaction to proton translocation, and thus conserves the redox energy in a proton gradient. This Paulinella chromatophora protein is NAD(P)H-quinone oxidoreductase subunit L, organellar chromatophore.